We begin with the raw amino-acid sequence, 202 residues long: 3-isopropylmalate dehydratase small subunit (202 aa).

It belongs to the LeuD family. LeuD type 1 subfamily. Heterodimer of LeuC and LeuD.

It carries out the reaction (2R,3S)-3-isopropylmalate = (2S)-2-isopropylmalate. The protein operates within amino-acid biosynthesis; L-leucine biosynthesis; L-leucine from 3-methyl-2-oxobutanoate: step 2/4. In terms of biological role, catalyzes the isomerization between 2-isopropylmalate and 3-isopropylmalate, via the formation of 2-isopropylmaleate. In Rhizobium johnstonii (strain DSM 114642 / LMG 32736 / 3841) (Rhizobium leguminosarum bv. viciae), this protein is 3-isopropylmalate dehydratase small subunit.